The following is a 499-amino-acid chain: Probable alpha-L-arabinofuranosidase B (499 aa).

The signal sequence occupies residues 1 to 18 (MFSRRNLVALGLAATVSA). A catalytic region spans residues 19 to 335 (GPCDIYEAGD…ENIVAAKYVS (317 aa)). Intrachain disulfides connect Cys-21/Cys-31, Cys-81/Cys-86, and Cys-176/Cys-177. An N-linked (GlcNAc...) asparagine glycan is attached at Asn-83. The N-linked (GlcNAc...) asparagine glycan is linked to Asn-202. Asp-219 lines the substrate pocket. The active-site Nucleophile is the Glu-221. Asn-222, Asn-223, and Gly-296 together coordinate substrate. The active-site Proton donor is Asp-297. The segment at 336–499 (GSLVSGPSFT…SFEIETAFAS (164 aa)) is ABD. Cys-401 and Cys-439 are joined by a disulfide. 8 residues coordinate substrate: His-416, Asn-418, Phe-419, Asp-435, His-463, Asp-465, Leu-468, and Asp-488.

Belongs to the glycosyl hydrolase 54 family.

Its subcellular location is the secreted. The enzyme catalyses Hydrolysis of terminal non-reducing alpha-L-arabinofuranoside residues in alpha-L-arabinosides.. It functions in the pathway glycan metabolism; L-arabinan degradation. Its function is as follows. Alpha-L-arabinofuranosidase involved in the degradation of arabinoxylan, a major component of plant hemicellulose. Able to hydrolyze 1,5-, 1,3- and 1,2-alpha-linkages not only in L-arabinofuranosyl oligosaccharides, but also in polysaccharides containing terminal non-reducing L-arabinofuranoses in side chains, like L-arabinan, arabinogalactan and arabinoxylan. The polypeptide is Probable alpha-L-arabinofuranosidase B (abfB) (Aspergillus niger (strain ATCC MYA-4892 / CBS 513.88 / FGSC A1513)).